We begin with the raw amino-acid sequence, 505 residues long: Probable alpha-L-arabinofuranosidase C (505 aa).

Residues N81, N152, N269, and N438 are each glycosylated (N-linked (GlcNAc...) asparagine).

Belongs to the glycosyl hydrolase 51 family.

It is found in the secreted. It catalyses the reaction Hydrolysis of terminal non-reducing alpha-L-arabinofuranoside residues in alpha-L-arabinosides.. It functions in the pathway glycan metabolism; L-arabinan degradation. Functionally, alpha-L-arabinofuranosidase involved in the degradation of arabinoxylan, a major component of plant hemicellulose. Acts only on small linear 1,5-alpha-linked L-arabinofuranosyl oligosaccharides. This chain is Probable alpha-L-arabinofuranosidase C (abfC), found in Aspergillus fumigatus (strain ATCC MYA-4609 / CBS 101355 / FGSC A1100 / Af293) (Neosartorya fumigata).